We begin with the raw amino-acid sequence, 245 residues long: 1-(5-phosphoribosyl)-5-[(5-phosphoribosylamino)methylideneamino] imidazole-4-carboxamide isomerase (245 aa).

Residue aspartate 7 is the Proton acceptor of the active site. The active-site Proton donor is aspartate 129.

Belongs to the HisA/HisF family.

It is found in the cytoplasm. It carries out the reaction 1-(5-phospho-beta-D-ribosyl)-5-[(5-phospho-beta-D-ribosylamino)methylideneamino]imidazole-4-carboxamide = 5-[(5-phospho-1-deoxy-D-ribulos-1-ylimino)methylamino]-1-(5-phospho-beta-D-ribosyl)imidazole-4-carboxamide. Its pathway is amino-acid biosynthesis; L-histidine biosynthesis; L-histidine from 5-phospho-alpha-D-ribose 1-diphosphate: step 4/9. This Shewanella piezotolerans (strain WP3 / JCM 13877) protein is 1-(5-phosphoribosyl)-5-[(5-phosphoribosylamino)methylideneamino] imidazole-4-carboxamide isomerase.